The sequence spans 23 residues: SV40 early leader protein (23 aa).

The disordered stretch occupies residues Met1 to Ala23.

The protein belongs to the polyomavirus early leader protein family.

Its function is as follows. May play a role in the lytic cycle. The sequence is that of SV40 early leader protein from Macaca (macaques).